Reading from the N-terminus, the 377-residue chain is Mechanosensory abnormality protein 6 (377 aa).

Residues 1-13 (MGLQSAAAHFINR) are Cytoplasmic-facing. The helical transmembrane segment at 14–34 (FIIWITIFMVACFLLRLLVVL) threads the bilayer. Residues 35 to 377 (DLNKRVYNHT…HCDLTHSYIT (343 aa)) are Extracellular-facing. Cys48 and Cys369 form a disulfide bridge. An N-linked (GlcNAc...) asparagine glycan is attached at Asn94.

It belongs to the paraoxonase family. In terms of assembly, component of a non-voltage-gated amiloride-sensitive cation channel complex (also called the degenerin channel complex) composed of at least the mec-2, mec-4, mec-6 and mec-10 subunits; the complex mediates mechanotransduction in touch cells. Interacts with mec-2, mec-4 and mec-10. Glycosylated. In terms of tissue distribution, expressed in neurons including the six touch receptors, ventral cord motor neurons, HSN, PVD, PVC, IL1, and several neurons near the nerve ring, in the anal ganglion and in the male tail sensory rays, in muscles including the body wall, vulval, intestinal, anal depressor and sphincter muscles, and in the excretory canal.

The protein resides in the cell membrane. Its subcellular location is the cell projection. The protein localises to the axon. Functionally, subunit of an amiloride-sensitive cation channel (degenerin channel complex) permeable for sodium, potassium, lithium and N-methylglucamine, and required for mechanosensory transduction (touch sensitivity). Interacts with degenerin channel proteins and stabilizes the channel. Plays a role in mechanosensory transduction (touch sensitivity). The chain is Mechanosensory abnormality protein 6 from Caenorhabditis elegans.